The chain runs to 49 residues: Large ribosomal subunit protein eL40 (49 aa).

This sequence belongs to the eukaryotic ribosomal protein eL40 family.

The sequence is that of Large ribosomal subunit protein eL40 from Haloquadratum walsbyi (strain DSM 16790 / HBSQ001).